A 141-amino-acid chain; its full sequence is Hemoglobin subunit alpha (141 aa).

The Globin domain maps to 1–141 (VLSPADKKNV…VSTVLTSKYR (141 aa)). Serine 3 carries the post-translational modification Phosphoserine. An N6-succinyllysine mark is found at lysine 7 and lysine 11. Lysine 16 is subject to N6-acetyllysine; alternate. N6-succinyllysine; alternate is present on lysine 16. Residue tyrosine 24 is modified to Phosphotyrosine. The residue at position 35 (serine 35) is a Phosphoserine. An N6-succinyllysine modification is found at lysine 40. Serine 49 carries the post-translational modification Phosphoserine. Histidine 58 contacts O2. Histidine 87 provides a ligand contact to heme b. A Phosphoserine modification is found at serine 102. Position 108 is a phosphothreonine (threonine 108). Serine 124 and serine 131 each carry phosphoserine. Phosphothreonine occurs at positions 134 and 137. Phosphoserine is present on serine 138.

This sequence belongs to the globin family. Heterotetramer of two alpha chains and two beta chains. In terms of tissue distribution, red blood cells.

Its function is as follows. Involved in oxygen transport from the lung to the various peripheral tissues. Functionally, hemopressin acts as an antagonist peptide of the cannabinoid receptor CNR1. Hemopressin-binding efficiently blocks cannabinoid receptor CNR1 and subsequent signaling. This Spermophilus citellus (European ground squirrel) protein is Hemoglobin subunit alpha (HBA).